We begin with the raw amino-acid sequence, 203 residues long: Histidine biosynthesis bifunctional protein HisIE (203 aa).

A phosphoribosyl-AMP cyclohydrolase region spans residues 1 to 114; it reads MLTEQQRREL…FGDTAHQWLF (114 aa). The segment at 115-203 is phosphoribosyl-ATP pyrophosphohydrolase; sequence LYQLEQLLAE…VIENLRKRHQ (89 aa).

It in the N-terminal section; belongs to the PRA-CH family. The protein in the C-terminal section; belongs to the PRA-PH family.

The protein localises to the cytoplasm. It carries out the reaction 1-(5-phospho-beta-D-ribosyl)-ATP + H2O = 1-(5-phospho-beta-D-ribosyl)-5'-AMP + diphosphate + H(+). It catalyses the reaction 1-(5-phospho-beta-D-ribosyl)-5'-AMP + H2O = 1-(5-phospho-beta-D-ribosyl)-5-[(5-phospho-beta-D-ribosylamino)methylideneamino]imidazole-4-carboxamide. Its pathway is amino-acid biosynthesis; L-histidine biosynthesis; L-histidine from 5-phospho-alpha-D-ribose 1-diphosphate: step 2/9. It participates in amino-acid biosynthesis; L-histidine biosynthesis; L-histidine from 5-phospho-alpha-D-ribose 1-diphosphate: step 3/9. The polypeptide is Histidine biosynthesis bifunctional protein HisIE (Escherichia coli O6:H1 (strain CFT073 / ATCC 700928 / UPEC)).